Reading from the N-terminus, the 519-residue chain is Exodeoxyribonuclease 7 large subunit (519 aa).

A disordered region spans residues 500–519 (VGRGKTRKPKEEPPAQGSLL).

This sequence belongs to the XseA family. In terms of assembly, heterooligomer composed of large and small subunits.

The protein localises to the cytoplasm. It carries out the reaction Exonucleolytic cleavage in either 5'- to 3'- or 3'- to 5'-direction to yield nucleoside 5'-phosphates.. Its function is as follows. Bidirectionally degrades single-stranded DNA into large acid-insoluble oligonucleotides, which are then degraded further into small acid-soluble oligonucleotides. The sequence is that of Exodeoxyribonuclease 7 large subunit from Cereibacter sphaeroides (strain ATCC 17023 / DSM 158 / JCM 6121 / CCUG 31486 / LMG 2827 / NBRC 12203 / NCIMB 8253 / ATH 2.4.1.) (Rhodobacter sphaeroides).